Consider the following 553-residue polypeptide: Tether containing UBX domain for GLUT4 (553 aa).

N-acetylalanine is present on A2. A compositionally biased stretch (low complexity) spans P182–L202. The segment at P182–V324 is disordered. At S184 the chain carries Phosphoserine. Residues E206–D217 show a composition bias toward basic and acidic residues. The span at R260–S280 shows a compositional bias: low complexity. Position 275 is a phosphoserine (S275). Basic and acidic residues predominate over residues E296–V324. An interaction with GLUT4 region spans residues P317–Q380. Positions E386–L462 constitute a UBX domain. The segment at G499 to K536 is disordered. A phosphoserine mark is found at S500 and S502. Residues S502–K512 are compositionally biased toward pro residues.

As to quaternary structure, interacts with GLUT4. Interacts with VCPKMT. Interacts with VCP. As to expression, ubiquitous. Highly expressed in testis, heart, skeletal muscle and pancreas.

The protein resides in the endomembrane system. Its subcellular location is the endoplasmic reticulum-Golgi intermediate compartment membrane. It is found in the cytoplasm. It localises to the nucleus. Its function is as follows. Tethering protein that sequesters GLUT4-containing vesicles in the cytoplasm in the absence of insulin. Modulates the amount of GLUT4 that is available at the cell surface. Enhances VCP methylation catalyzed by VCPKMT. This is Tether containing UBX domain for GLUT4 (ASPSCR1) from Homo sapiens (Human).